The primary structure comprises 1189 residues: Phosphatidylinositol 3,4,5-trisphosphate 5-phosphatase 1 (1189 aa).

Positions 5 to 101 (WNHGNITRSK…GLVTHLQYPV (97 aa)) constitute an SH2 domain. A compositionally biased stretch (acidic residues) spans 103 to 117 (LEEEDTGDDPEEDTV). The disordered stretch occupies residues 103 to 132 (LEEEDTGDDPEEDTVESVVSPPELPPRNIP). An SH3-binding 1 motif is present at residues 124-129 (PELPPR). Position 243 is a phosphoserine (S243). A disordered region spans residues 870–906 (TERDESSGPKTLKSLTSHDPMKQWEVTSRAPPCSGSS). Residues 912 to 915 (NPNY) carry the NPXY motif 1 motif. Y915 bears the Phosphotyrosine mark. The segment at 922-1189 (GPPMPLHVKQ…PGPLGRTAMQ (268 aa)) is disordered. Polar residues predominate over residues 931–943 (QTLSPDQQPTAWS). S934 carries the phosphoserine modification. At Y944 the chain carries Phosphotyrosine. S960 carries the phosphoserine modification. Residues 961–971 (PPTPPGQPPIS) show a composition bias toward pro residues. At T963 the chain carries Phosphothreonine. The short motif at 969-974 (PISPKK) is the SH3-binding 2 element. S971 is subject to Phosphoserine. The tract at residues 1016-1030 (MFENPLYGSLSSFPK) is interaction with DAB2. An NPXY motif 2 motif is present at residues 1019-1022 (NPLY). At Y1022 the chain carries Phosphotyrosine. The segment covering 1033–1047 (PRKDQESPKMPRKEP) has biased composition (basic and acidic residues). The SH3-binding 3 motif lies at 1040–1051 (PKMPRKEPPPCP). The segment covering 1134-1145 (PPTPTPRPPLPV) has biased composition (pro residues). A compositionally biased stretch (basic and acidic residues) spans 1157–1177 (KGRDYRDNTELPHHGKHRPEE).

The protein belongs to the inositol 1,4,5-trisphosphate 5-phosphatase family. In terms of assembly, interacts with tyrosine phosphorylated form of SHC1. Interacts with tyrosine phosphorylated form of DOK1. Interacts with tyrosine phosphorylated form of DOK3. Interacts with tyrosine phosphorylated form of SLAMF1/CD150. Interacts with PTPN11 in response to IL-3. Interacts with receptor EPOR. Interacts with receptors MS4A2/FCER1B and FCER1G. Interacts with receptors FCGR2B and FCGR3. Interacts with receptor FCGR2A, leading to regulate gene expression during the phagocytic process. Interacts with GRB2. Interacts with PLCG1. Interacts with tyrosine kinases SRC and TEC. Interacts with c-Met/MET. Interacts with MILR1 (tyrosine-phosphorylated). Can weakly interact (via NPXY motif 2) with DAB2 (via PID domain); the interaction is impaired by tyrosine phosphorylation of the NPXY motif. Interacts with FCRL3 and FCRL6 (tyrosine phosphorylated form). Interacts (via SH2 domain) with tyrosine phosphorylated KLRC1 (via ITIM). Interacts with MPL/TPOR. In terms of processing, tyrosine phosphorylated by the members of the SRC family after exposure to a diverse array of extracellular stimuli such as cytokines, growth factors, antibodies, chemokines, integrin ligands and hypertonic and oxidative stress. Phosphorylated upon IgG receptor FCGR2B-binding. In terms of tissue distribution, specifically expressed in immune and hematopoietic cells. Expressed in bone marrow and blood cells. Levels vary considerably within this compartment. Present in at least 74% of immature CD34+ cells, whereas within the more mature population of CD33+ cells, it is present in only 10% of cells. Present in the majority of T-cells, while it is present in a minority of B-cells (at protein level).

It localises to the cytoplasm. The protein resides in the cell membrane. It is found in the membrane raft. Its subcellular location is the cytoskeleton. The protein localises to the membrane. It carries out the reaction a 1,2-diacyl-sn-glycero-3-phospho-(1D-myo-inositol-3,4,5-trisphosphate) + H2O = a 1,2-diacyl-sn-glycero-3-phospho-(1D-myo-inositol-3,4-bisphosphate) + phosphate. It catalyses the reaction 1D-myo-inositol 1,3,4,5-tetrakisphosphate + H2O = 1D-myo-inositol 1,3,4-trisphosphate + phosphate. The catalysed reaction is a 1,2-diacyl-sn-glycero-3-phospho-(1D-myo-inositol-4,5-bisphosphate) + H2O = a 1,2-diacyl-sn-glycero-3-phospho-(1D-myo-inositol 4-phosphate) + phosphate. Its activity is regulated as follows. Activated upon translocation to the sites of synthesis of PtdIns(3,4,5)P3 in the membrane. Its function is as follows. Phosphatidylinositol (PtdIns) phosphatase that specifically hydrolyzes the 5-phosphate of phosphatidylinositol-3,4,5-trisphosphate (PtdIns(3,4,5)P3) to produce PtdIns(3,4)P2, thereby negatively regulating the PI3K (phosphoinositide 3-kinase) pathways. Able also to hydrolyzes the 5-phosphate of phosphatidylinositol-4,5-bisphosphate (PtdIns(4,5)P3) and inositol 1,3,4,5-tetrakisphosphate. Acts as a negative regulator of B-cell antigen receptor signaling. Mediates signaling from the FC-gamma-RIIB receptor (FCGR2B), playing a central role in terminating signal transduction from activating immune/hematopoietic cell receptor systems. Acts as a negative regulator of myeloid cell proliferation/survival and chemotaxis, mast cell degranulation, immune cells homeostasis, integrin alpha-IIb/beta-3 signaling in platelets and JNK signaling in B-cells. Regulates proliferation of osteoclast precursors, macrophage programming, phagocytosis and activation and is required for endotoxin tolerance. Involved in the control of cell-cell junctions, CD32a signaling in neutrophils and modulation of EGF-induced phospholipase C activity. Key regulator of neutrophil migration, by governing the formation of the leading edge and polarization required for chemotaxis. Modulates FCGR3/CD16-mediated cytotoxicity in NK cells. Mediates the activin/TGF-beta-induced apoptosis through its Smad-dependent expression. This is Phosphatidylinositol 3,4,5-trisphosphate 5-phosphatase 1 (INPP5D) from Homo sapiens (Human).